The chain runs to 270 residues: uncharacterized protein (270 aa).

The HTH lysR-type domain maps to 1–50 (LTEVVKAQSFTKAAENLYTSQPSISRDIKRLENDYDVKVFEFKHSKMTLT). Residues 10 to 29 (FTKAAENLYTSQPSISRDIK) constitute a DNA-binding region (H-T-H motif).

Belongs to the LysR transcriptional regulatory family.

This is an uncharacterized protein from Staphylococcus xylosus.